The chain runs to 493 residues: Mitochondrial distribution and morphology protein 10 (493 aa).

The protein belongs to the MDM10 family. As to quaternary structure, component of the ER-mitochondria encounter structure (ERMES) or MDM complex, composed of MMM1, MDM10, MDM12 and MDM34. Associates with the mitochondrial outer membrane sorting assembly machinery SAM(core) complex, which consists of SAM35, SAM37 and SAM50, to form a SAM(holo) complex.

The protein localises to the mitochondrion outer membrane. Functionally, component of the ERMES/MDM complex, which serves as a molecular tether to connect the endoplasmic reticulum and mitochondria. Components of this complex are involved in the control of mitochondrial shape and protein biogenesis and may function in phospholipid exchange. MDM10 is involved in the late assembly steps of the general translocase of the mitochondrial outer membrane (TOM complex). Functions in the TOM40-specific route of the assembly of outer membrane beta-barrel proteins, including the association of TOM40 with the receptor TOM22 and small TOM proteins. Can associate with the SAM(core) complex as well as the MDM12-MMM1 complex, both involved in late steps of the major beta-barrel assembly pathway, that is responsible for biogenesis of all outer membrane beta-barrel proteins. May act as a switch that shuttles between both complexes and channels precursor proteins into the TOM40-specific pathway. Plays a role in mitochondrial morphology and in the inheritance of mitochondria. This Saccharomyces cerevisiae (strain ATCC 204508 / S288c) (Baker's yeast) protein is Mitochondrial distribution and morphology protein 10.